Reading from the N-terminus, the 147-residue chain is RxLR effector protein Avr3a (147 aa).

A signal peptide spans 1 to 21 (MRLAIMLSATAVAINFATCSA). A RxLR-dEER motif is present at residues 44-59 (RLLRKNEENEETSEER). K48 carries the post-translational modification N6-acetyllysine. The tract at residues 77–147 (ALTKRADAKK…YMMHLGLTGY (71 aa)) is effector domain.

Belongs to the RxLR effector family. As to quaternary structure, forms homodimers via the RxLR-dEER motif. Interacts with host E3 ligase CMPG1. Interacts with host DRP2. Post-translationally, proteolytically cleaved. The cleavage site directly after the RxLR sequence and the high conservation among other effector proteins suggest that the RxLR motif might play a crucial role in the intracellular processing before secretion. Glycosylated. In terms of processing, N-acetylated at Lys-48 after cleavage.

It is found in the secreted. It localises to the host cytoplasm. The protein resides in the host endosome. Multifunctional effector that can suppress host BAK1/SERK3-mediated immunity through at least two different pathways. Manipulates plant immunity by targeting and stabilizing host E3 ligase CMPG1. Preventing the normal 26S proteasome-dependent degradation of potato CMPG1, and thus potentially of its protein substrates in the host cell, further abolishes host cell death during the biotrophic phase of infection. Also associates with the dynamin-related protein 2 (DRP2), a plant GTPase involved in immune receptor-mediated endocytosis. The Avr3A(KI) form is recognized by R3a which triggers R3a-mediated hypersensitivity and suppresses INF1-induced cell death. In Phytophthora infestans (Potato late blight agent), this protein is RxLR effector protein Avr3a.